We begin with the raw amino-acid sequence, 197 residues long: Small ribosomal subunit protein uS10c (197 aa).

A chloroplast-targeting transit peptide spans M1–F60. A disordered region spans residues E67–D91.

Belongs to the universal ribosomal protein uS10 family. As to quaternary structure, part of the 30S ribosomal subunit.

It localises to the plastid. Its subcellular location is the chloroplast. This is Small ribosomal subunit protein uS10c (RPS10) from Mesembryanthemum crystallinum (Common ice plant).